The chain runs to 616 residues: Homeodomain-interacting protein kinase 4 (616 aa).

Residues 11-347 form the Protein kinase domain; sequence YDIIEVLGKG…PSAALRHPFV (337 aa). ATP is bound by residues 17–25 and lysine 40; that span reads LGKGTFGEV. Aspartate 136 (proton acceptor) is an active-site residue. Positions 486–616 are disordered; it reads HKARKPPAGS…SFLQHVTGHH (131 aa). Residues 496 to 511 show a composition bias toward polar residues; it reads KSDSNFSNLIRLSQVS. Serine 511 is subject to Phosphoserine.

This sequence belongs to the protein kinase superfamily. CMGC Ser/Thr protein kinase family. HIPK subfamily. Autophosphorylated.

The protein resides in the cytoplasm. It catalyses the reaction L-seryl-[protein] + ATP = O-phospho-L-seryl-[protein] + ADP + H(+). The enzyme catalyses L-threonyl-[protein] + ATP = O-phospho-L-threonyl-[protein] + ADP + H(+). Protein kinase that phosphorylates human TP53 at Ser-9, and thus induces TP53 repression of BIRC5 promoter. May act as a corepressor of transcription factors (Potential). The chain is Homeodomain-interacting protein kinase 4 (HIPK4) from Homo sapiens (Human).